Here is a 157-residue protein sequence, read N- to C-terminus: Crossover junction endodeoxyribonuclease RuvC (157 aa).

Residues Asp-7, Glu-67, and Asp-140 contribute to the active site. Positions 7, 67, and 140 each coordinate Mg(2+).

This sequence belongs to the RuvC family. In terms of assembly, homodimer which binds Holliday junction (HJ) DNA. The HJ becomes 2-fold symmetrical on binding to RuvC with unstacked arms; it has a different conformation from HJ DNA in complex with RuvA. In the full resolvosome a probable DNA-RuvA(4)-RuvB(12)-RuvC(2) complex forms which resolves the HJ. Mg(2+) serves as cofactor.

Its subcellular location is the cytoplasm. The enzyme catalyses Endonucleolytic cleavage at a junction such as a reciprocal single-stranded crossover between two homologous DNA duplexes (Holliday junction).. Functionally, the RuvA-RuvB-RuvC complex processes Holliday junction (HJ) DNA during genetic recombination and DNA repair. Endonuclease that resolves HJ intermediates. Cleaves cruciform DNA by making single-stranded nicks across the HJ at symmetrical positions within the homologous arms, yielding a 5'-phosphate and a 3'-hydroxyl group; requires a central core of homology in the junction. The consensus cleavage sequence is 5'-(A/T)TT(C/G)-3'. Cleavage occurs on the 3'-side of the TT dinucleotide at the point of strand exchange. HJ branch migration catalyzed by RuvA-RuvB allows RuvC to scan DNA until it finds its consensus sequence, where it cleaves and resolves the cruciform DNA. The protein is Crossover junction endodeoxyribonuclease RuvC of Rickettsia akari (strain Hartford).